The sequence spans 589 residues: Aspartate--tRNA ligase (589 aa).

Position 174 (glutamate 174) interacts with L-aspartate. The interval 198–201 is aspartate; that stretch reads QLFK. Arginine 220 contacts L-aspartate. Residues 220 to 222 and glutamine 229 contribute to the ATP site; that span reads RDE. An L-aspartate-binding site is contributed by histidine 448. Residue glutamate 483 coordinates ATP. Arginine 490 provides a ligand contact to L-aspartate. Residue 535-538 coordinates ATP; it reads GIDR.

This sequence belongs to the class-II aminoacyl-tRNA synthetase family. Type 1 subfamily. Homodimer.

The protein resides in the cytoplasm. The enzyme catalyses tRNA(Asp) + L-aspartate + ATP = L-aspartyl-tRNA(Asp) + AMP + diphosphate. In terms of biological role, catalyzes the attachment of L-aspartate to tRNA(Asp) in a two-step reaction: L-aspartate is first activated by ATP to form Asp-AMP and then transferred to the acceptor end of tRNA(Asp). The polypeptide is Aspartate--tRNA ligase (Xylella fastidiosa (strain 9a5c)).